Here is a 233-residue protein sequence, read N- to C-terminus: Leucyl/phenylalanyl-tRNA--protein transferase (233 aa).

It belongs to the L/F-transferase family.

It is found in the cytoplasm. It carries out the reaction N-terminal L-lysyl-[protein] + L-leucyl-tRNA(Leu) = N-terminal L-leucyl-L-lysyl-[protein] + tRNA(Leu) + H(+). The enzyme catalyses N-terminal L-arginyl-[protein] + L-leucyl-tRNA(Leu) = N-terminal L-leucyl-L-arginyl-[protein] + tRNA(Leu) + H(+). It catalyses the reaction L-phenylalanyl-tRNA(Phe) + an N-terminal L-alpha-aminoacyl-[protein] = an N-terminal L-phenylalanyl-L-alpha-aminoacyl-[protein] + tRNA(Phe). In terms of biological role, functions in the N-end rule pathway of protein degradation where it conjugates Leu, Phe and, less efficiently, Met from aminoacyl-tRNAs to the N-termini of proteins containing an N-terminal arginine or lysine. This chain is Leucyl/phenylalanyl-tRNA--protein transferase, found in Klebsiella pneumoniae subsp. pneumoniae (strain ATCC 700721 / MGH 78578).